Reading from the N-terminus, the 338-residue chain is Fructose-1,6-bisphosphatase class 1 1 (338 aa).

The Mg(2+) site is built by Glu91, Asp113, Leu115, and Asp116. Substrate is bound by residues 116-119 (DGSS), Asn208, and Lys274. Glu280 provides a ligand contact to Mg(2+).

It belongs to the FBPase class 1 family. As to quaternary structure, homotetramer. It depends on Mg(2+) as a cofactor.

The protein resides in the cytoplasm. It catalyses the reaction beta-D-fructose 1,6-bisphosphate + H2O = beta-D-fructose 6-phosphate + phosphate. The protein operates within carbohydrate biosynthesis; gluconeogenesis. This is Fructose-1,6-bisphosphatase class 1 1 from Cupriavidus taiwanensis (strain DSM 17343 / BCRC 17206 / CCUG 44338 / CIP 107171 / LMG 19424 / R1) (Ralstonia taiwanensis (strain LMG 19424)).